We begin with the raw amino-acid sequence, 177 residues long: Decaprenylphosphoryl-5-phosphoribose phosphatase (177 aa).

The next 4 membrane-spanning stretches (helical) occupy residues 35–55 (HFGE…IALP), 62–82 (LVAG…KRLV), 124–144 (GLPL…LLGV), and 150–170 (VAVG…VGGG).

This sequence belongs to the PA-phosphatase related phosphoesterase family.

The protein localises to the cell membrane. The enzyme catalyses trans,octa-cis-decaprenylphospho-beta-D-ribofuranose 5-phosphate + H2O = trans,octa-cis-decaprenylphospho-beta-D-ribofuranose + phosphate. It participates in cell wall biogenesis; cell wall polysaccharide biosynthesis. In terms of biological role, phosphatase involved in the biosynthesis of decaprenylphosphoryl arabinose (DPA), which serves as the arabinose donor for the biosynthesis of arabinogalactan, the major mycobacterial cell wall polysaccharide. Catalyzes the dephosphorylation of decaprenylphosphoryl-5-phosphoribose (DPPR) to decaprenyl-phosphoribose (DPR). This chain is Decaprenylphosphoryl-5-phosphoribose phosphatase, found in Mycobacterium tuberculosis (strain CDC 1551 / Oshkosh).